We begin with the raw amino-acid sequence, 183 residues long: Capsid protein (183 aa).

Residues asparagine 136–cysteine 183 form a disordered region. Basic residues predominate over residues valine 149 to serine 176. A phosphoserine; by host mark is found at serine 155, serine 162, and serine 170. A 1; half-length repeat occupies serine 155–proline 161. The tract at residues serine 155–glutamine 177 is 3 X 8 AA repeats of S-P-R-R-R-[PR]-S-Q. The Bipartite nuclear localization signal signature appears at arginine 158–arginine 175. Repeat copies occupy residues serine 162–glutamine 169 and serine 170–glutamine 177. Residues glutamine 177–cysteine 183 form an RNA binding region.

The protein belongs to the orthohepadnavirus core antigen family. Homodimerizes, then multimerizes. Interacts with cytosol exposed regions of viral L glycoprotein present in the reticulum-to-Golgi compartment. Interacts with human FLNB. Phosphorylated form interacts with host importin alpha; this interaction depends on the exposure of the NLS, which itself depends upon genome maturation and/or phosphorylation of the capsid protein. Interacts with host NUP153. Phosphorylated by host SRPK1, SRPK2, and maybe protein kinase C or GAPDH. Phosphorylation is critical for pregenomic RNA packaging. Protein kinase C phosphorylation is stimulated by HBx protein and may play a role in transport of the viral genome to the nucleus at the late step during the viral replication cycle.

The protein resides in the virion. Its subcellular location is the host cytoplasm. Its function is as follows. Self assembles to form an icosahedral capsid. Most capsids appear to be large particles with an icosahedral symmetry of T=4 and consist of 240 copies of capsid protein, though a fraction forms smaller T=3 particles consisting of 180 capsid proteins. Entering capsids are transported along microtubules to the nucleus. Phosphorylation of the capsid is thought to induce exposure of nuclear localization signal in the C-terminal portion of the capsid protein that allows binding to the nuclear pore complex via the importin (karyopherin-) alpha and beta. Capsids are imported in intact form through the nuclear pore into the nuclear basket, where it probably binds NUP153. Only capsids that contain the mature viral genome can release the viral DNA and capsid protein into the nucleoplasm. Immature capsids get stuck in the basket. Capsids encapsulate the pre-genomic RNA and the P protein. Pre-genomic RNA is reverse-transcribed into DNA while the capsid is still in the cytoplasm. The capsid can then either be directed to the nucleus, providing more genomes for transcription, or bud through the endoplasmic reticulum to provide new virions. The polypeptide is Capsid protein (Homo sapiens (Human)).